Consider the following 75-residue polypeptide: Alpha-elapitoxin-Bc2c (75 aa).

An N-terminal signal peptide occupies residues 1–2 (YT). Intrachain disulfides connect Cys-5–Cys-24, Cys-17–Cys-45, Cys-30–Cys-34, Cys-49–Cys-60, and Cys-61–Cys-66.

It belongs to the three-finger toxin family. Long-chain subfamily. Type II alpha-neurotoxin sub-subfamily. Monomer in solution, homodimer in crystal state. Expressed by the venom gland.

It localises to the secreted. Functionally, binds to muscular and neuronal nicotinic acetylcholine receptor (nAChR) and inhibits acetylcholine from binding to the receptor, thereby impairing neuromuscular and neuronal transmission. Blocks muscle type nAChR. Also binds with high affinity to alpha-7/CHRNA7 nAChRs. In addition, shows a weak inhibition of neuronal alpha-3-beta-2/CHRNA3-CHRNB2 nAChR. Selectively binds to alpha-1-delta subunit interface of the mouse muscle nicotinic acetylcholine receptor, with a 10-fold higher affinity for the adult than for the fetal receptors. In vivo, when intraperitoneally injected into mice, causes flaccid paralysis and respiratory distress, followed by death within 2-4 hours. In Bungarus candidus (Malayan krait), this protein is Alpha-elapitoxin-Bc2c.